We begin with the raw amino-acid sequence, 1096 residues long: Pentatricopeptide repeat-containing protein At5g55840 (1096 aa).

PPR repeat units lie at residues 122–156, 157–191, 192–226, 227–261, 262–296, 297–331, 332–366, 367–401, 402–436, 437–471, 472–506, 507–541, 542–576, 577–607, 612–646, 647–681, 683–717, 718–752, 753–787, 788–822, 823–857, 858–892, 893–927, 928–962, 963–997, 998–1032, and 1033–1068; these read NPSVYDILIRVYLREGMIQDSLEIFRLMGLYGFNP, SVYTCNAILGSVVKSGEDVSVWSFLKEMLKRKICP, DVATFNILINVLCAEGSFEKSSYLMQKMEKSGYAP, TIVTYNTVLHWYCKKGRFKAAIELLDHMKSKGVDA, DVCTYNMLIHDLCRSNRIAKGYLLLRDMRKRMIHP, NEVTYNTLINGFSNEGKVLIASQLLNEMLSFGLSP, NHVTFNALIDGHISEGNFKEALKMFYMMEAKGLTP, SEVSYGVLLDGLCKNAEFDLARGFYMRMKRNGVCV, GRITYTGMIDGLCKNGFLDEAVVLLNEMSKDGIDP, DIVTYSALINGFCKVGRFKTAKEIVCRIYRVGLSP, NGIIYSTLIYNCCRMGCLKEAIRIYEAMILEGHTR, DHFTFNVLVTSLCKAGKVAEAEEFMRCMTSDGILP, NTVSFDCLINGYGNSGEGLKAFSVFDEMTKVGHHP, TFFTYGSLLKGLCKGGHLREAEKFLKSLHAV, DTVMYNTLLTAMCKSGNLAKAVSLFGEMVQRSILP, DSYTYTSLISGLCRKGKTVIAILFAKEAEARGNVL, NKVMYTCFVDGMFKAGQWKAGIYFREQMDNLGHTP, DIVTTNAMIDGYSRMGKIEKTNDLLPEMGNQNGGP, NLTTYNILLHGYSKRKDVSTSFLLYRSIILNGILP, DKLTCHSLVLGICESNMLEIGLKILKAFICRGVEV, DRYTFNMLISKCCANGEINWAFDLVKVMTSLGISL, DKDTCDAMVSVLNRNHRFQESRMVLHEMSKQGISP, ESRKYIGLINGLCRVGDIKTAFVVKEEMIAHKICP, PNVAESAMVRALAKCGKADEATLLLRFMLKMKLVP, TIASFTTLMHLCCKNGNVIEALELRVVMSNCGLKL, DLVSYNVLITGLCAKGDMALAFELYEEMKGDGFLA, and NATTYKALIRGLLARETAFSGADIILKDLLARGFIT.

This sequence belongs to the PPR family. P subfamily.

This chain is Pentatricopeptide repeat-containing protein At5g55840, found in Arabidopsis thaliana (Mouse-ear cress).